The sequence spans 788 residues: Spastin (788 aa).

The segment at 1–105 (MVRTKNQSSS…PRSAGGPSSV (105 aa)) is disordered. Over 1–116 (MVRTKNQSSS…KQNLYVVSFP (116 aa)) the chain is Cytoplasmic. The segment at 1-227 (MVRTKNQSSS…NRSGSGYSPG (227 aa)) is required for localization to punctate cytoplasmic foci. Low complexity-rich tracts occupy residues 8–48 (SSSS…SSHR) and 57–75 (ATNV…SSPD). Residues 117–137 (IIFLFNVLRSLIYQLFCIFRY) constitute an intramembrane region (helical). Over 138-788 (LYGASTKVIY…WSSDYGDITI (651 aa)) the chain is Cytoplasmic. A sufficient for interaction with microtubules and microtubule severing region spans residues 227–788 (GPGDPLLAKQ…WSSDYGDITI (562 aa)). The region spanning 240 to 315 (HRRAFEYISK…SMARDRLHFL (76 aa)) is the MIT domain. Positions 330–353 (KEEQKPNPSREQHQKPQKAREAAD) are enriched in basic and acidic residues. A disordered region spans residues 330–484 (KEEQKPNPSR…SGSGSGASTP (155 aa)). Positions 380–400 (LTTPRISATATTPTSSSSLAS) are enriched in low complexity. Polar residues-rich tracts occupy residues 419–433 (NKSQ…SKTS) and 453–469 (QFSS…RTPI). The interval 471-485 (NNGASGSGSGASTPV) is required for interaction with microtubules. An ATP-binding site is contributed by 553–560 (GPPGNGKT).

The protein belongs to the AAA ATPase family. Spastin subfamily. As to quaternary structure, homohexamer. The homohexamer is stabilized by ATP-binding. The homohexamer may adopt a ring conformation through which microtubules pass prior to being severed. Interacts with microtubules. Interacts with atl; may be involved in microtubule dynamics.

Its subcellular location is the membrane. The protein localises to the cytoplasm. It is found in the cytoskeleton. The protein resides in the microtubule organizing center. It localises to the centrosome. Its subcellular location is the chromosome. The protein localises to the lipid droplet. The enzyme catalyses n ATP + n H2O + a microtubule = n ADP + n phosphate + (n+1) alpha/beta tubulin heterodimers.. In terms of biological role, ATP-dependent microtubule severing protein. Stimulates microtubule minus-end depolymerization and poleward microtubule flux in the mitotic spindle. Regulates microtubule stability in the neuromuscular junction synapse. Involved in lipid metabolism by regulating the size and distribution of lipid droplets. Involved in axon regeneration by regulating microtubule severing. This is Spastin from Drosophila pseudoobscura pseudoobscura (Fruit fly).